The chain runs to 163 residues: Transmembrane protein 278 (163 aa).

Residues 1 to 37 (MSEQGRETEEEEGGGGASDTAPMLPRGPPDHQASALT) are disordered. 2 helical membrane-spanning segments follow: residues 51–71 (LLAGLLLHLLLPAAAFLLVLL) and 105–125 (AALIVFGLLSLPPLLVLASAV). The span at 136–148 (LLPPPAGTPGPRR) shows a compositional bias: pro residues. The tract at residues 136 to 156 (LLPPPAGTPGPRRPPGRPDED) is disordered.

This sequence belongs to the TMEM88 family.

It localises to the membrane. The sequence is that of Transmembrane protein 278 from Homo sapiens (Human).